A 333-amino-acid polypeptide reads, in one-letter code: MFNLKNRNFLTLMDFTPKEINYFLDLARDLKRAKYTGTEVQRMKGKNIALIFEKASTRTRCAFEVGAKDQGAHVTYLGPTGSHIGKKESAADTARVLGRMYDGIEYRGFGQEIVETLAEYAGVPVWNGLTDEDHPTQILADFLTIREHFNKPLNEIKFAYVGDGANNMANALMIGAVKMGMDFRIVSPKEIPTDAALVAKCKEIAAETGAKVTITDNIEEGVKGCDVLYTDVWVSMGEPDSVWESKIKLLTPYRVDMNMIKMTGNPDAKFMHCLPAFHDEETAVGKEIKEKYGLSEMEVSHELFESKYSIVFDEAENRMHTIKAVMVATLGDQ.

Carbamoyl phosphate is bound by residues 56–59, R107, and 134–137; these read STRT and HPTQ. Residues N167, D231, and 235 to 236 each bind L-ornithine; that span reads SM. Residues 273–274 and R318 contribute to the carbamoyl phosphate site; that span reads CL.

It belongs to the aspartate/ornithine carbamoyltransferase superfamily. OTCase family.

It is found in the cytoplasm. It catalyses the reaction carbamoyl phosphate + L-ornithine = L-citrulline + phosphate + H(+). It participates in amino-acid degradation; L-arginine degradation via ADI pathway; carbamoyl phosphate from L-arginine: step 2/2. Functionally, reversibly catalyzes the transfer of the carbamoyl group from carbamoyl phosphate (CP) to the N(epsilon) atom of ornithine (ORN) to produce L-citrulline. The chain is Ornithine carbamoyltransferase from Clostridium botulinum (strain 657 / Type Ba4).